The following is a 186-amino-acid chain: ATP synthase subunit delta, chloroplastic (186 aa).

This sequence belongs to the ATPase delta chain family. In terms of assembly, F-type ATPases have 2 components, F(1) - the catalytic core - and F(0) - the membrane proton channel. F(1) has five subunits: alpha(3), beta(3), gamma(1), delta(1), epsilon(1). CF(0) has four main subunits: a(1), b(1), b'(1) and c(10-14). The alpha and beta chains form an alternating ring which encloses part of the gamma chain. F(1) is attached to F(0) by a central stalk formed by the gamma and epsilon chains, while a peripheral stalk is formed by the delta, b and b' chains.

It localises to the plastid. It is found in the chloroplast thylakoid membrane. F(1)F(0) ATP synthase produces ATP from ADP in the presence of a proton or sodium gradient. F-type ATPases consist of two structural domains, F(1) containing the extramembraneous catalytic core and F(0) containing the membrane proton channel, linked together by a central stalk and a peripheral stalk. During catalysis, ATP synthesis in the catalytic domain of F(1) is coupled via a rotary mechanism of the central stalk subunits to proton translocation. In terms of biological role, this protein is part of the stalk that links CF(0) to CF(1). It either transmits conformational changes from CF(0) to CF(1) or is implicated in proton conduction. In Pyropia yezoensis (Susabi-nori), this protein is ATP synthase subunit delta, chloroplastic.